The sequence spans 710 residues: Polyribonucleotide nucleotidyltransferase (710 aa).

2 residues coordinate Mg(2+): Asp-488 and Asp-494. The 60-residue stretch at 555–614 (PRIETITIPTDKIRDVIGSGGKVIREIVETTGAKVDVNDDGVIKVSSSDGASIKAALDWI) folds into the KH domain. Residues 624–692 (GQIYKGKVVK…DRGKVRLSMK (69 aa)) enclose the S1 motif domain.

This sequence belongs to the polyribonucleotide nucleotidyltransferase family. It depends on Mg(2+) as a cofactor.

The protein resides in the cytoplasm. The catalysed reaction is RNA(n+1) + phosphate = RNA(n) + a ribonucleoside 5'-diphosphate. Functionally, involved in mRNA degradation. Catalyzes the phosphorolysis of single-stranded polyribonucleotides processively in the 3'- to 5'-direction. This is Polyribonucleotide nucleotidyltransferase from Maricaulis maris (strain MCS10) (Caulobacter maris).